A 25-amino-acid chain; its full sequence is Snaclec bothroalternin subunit alpha/beta (25 aa).

The C-type lectin domain occupies 1–25 (DCPSDWSNHEGHCYRVFNEWMNWAD). Residues Cys2 and Cys13 are joined by a disulfide bond.

Belongs to the snaclec family. In terms of assembly, heterodimer of subunits alpha and beta; disulfide-linked. As to expression, expressed by the venom gland.

The protein localises to the secreted. Its function is as follows. Thrombin (F2) inhibitor that inhibits aggregation of rabbit platelets induced by alpha-thrombin. The polypeptide is Snaclec bothroalternin subunit alpha/beta (Bothrops alternatus (Urutu)).